Here is a 118-residue protein sequence, read N- to C-terminus: Melanoma antigen recognized by T-cells 1 (118 aa).

A helical membrane pass occupies residues 27–47 (AAGIGILTVILGVLLLIGCWY). Over 48-118 (CRRRNGYRAL…AEQSPPPYSP (71 aa)) the chain is Cytoplasmic. Residues 78-118 (GFDHRDSKVSLQEKNCEPVVPNAPPAYEKLSAEQSPPPYSP) form a disordered region. The residue at position 108 (Ser-108) is a Phosphoserine.

As to quaternary structure, interacts with PMEL. Interacts with GPR143. In terms of processing, acylated. As to expression, expression is restricted to melanoma and melanocyte cell lines and retina.

The protein resides in the endoplasmic reticulum membrane. Its subcellular location is the golgi apparatus. It is found in the trans-Golgi network membrane. It localises to the melanosome. Involved in melanosome biogenesis by ensuring the stability of GPR143. Plays a vital role in the expression, stability, trafficking, and processing of melanocyte protein PMEL, which is critical to the formation of stage II melanosomes. The sequence is that of Melanoma antigen recognized by T-cells 1 (MLANA) from Homo sapiens (Human).